The following is a 629-amino-acid chain: Probable alpha-L-arabinofuranosidase A (629 aa).

An N-terminal signal peptide occupies residues 1-25; sequence MVALSTLSGLSALPFLFSLVQNVYG. N-linked (GlcNAc...) asparagine glycosylation is found at Asn36, Asn51, Asn140, Asn152, Asn168, Asn171, Asn260, Asn494, and Asn534.

The protein belongs to the glycosyl hydrolase 51 family.

Its subcellular location is the secreted. It carries out the reaction Hydrolysis of terminal non-reducing alpha-L-arabinofuranoside residues in alpha-L-arabinosides.. Its pathway is glycan metabolism; L-arabinan degradation. Functionally, alpha-L-arabinofuranosidase involved in the degradation of arabinoxylan, a major component of plant hemicellulose. Acts only on small linear 1,5-alpha-linked L-arabinofuranosyl oligosaccharides. The protein is Probable alpha-L-arabinofuranosidase A (abfA) of Aspergillus flavus (strain ATCC 200026 / FGSC A1120 / IAM 13836 / NRRL 3357 / JCM 12722 / SRRC 167).